A 374-amino-acid polypeptide reads, in one-letter code: Ribosomal RNA large subunit methyltransferase G (374 aa).

This sequence belongs to the methyltransferase superfamily. RlmG family.

It localises to the cytoplasm. It carries out the reaction guanosine(1835) in 23S rRNA + S-adenosyl-L-methionine = N(2)-methylguanosine(1835) in 23S rRNA + S-adenosyl-L-homocysteine + H(+). In terms of biological role, specifically methylates the guanine in position 1835 (m2G1835) of 23S rRNA. This Pseudomonas syringae pv. tomato (strain ATCC BAA-871 / DC3000) protein is Ribosomal RNA large subunit methyltransferase G.